Reading from the N-terminus, the 543-residue chain is Putative pectinesterase/pectinesterase inhibitor 22 (543 aa).

The signal sequence occupies residues 1–19 (MGITTALLLVMLMSVHTSS). Positions 38-197 (AKACQFIDAH…TQLVSNVLDM (160 aa)) are pectinesterase inhibitor 22. 2 N-linked (GlcNAc...) asparagine glycosylation sites follow: Asn211 and Asn263. The tract at residues 240–527 (NTVVAIDGKG…FTVGSFIDGR (288 aa)) is pectinesterase 22. Thr315 and Gln345 together coordinate substrate. Asp368 (proton donor; for pectinesterase activity) is an active-site residue. A disulfide bond links Cys382 and Cys402. Catalysis depends on Asp389, which acts as the Nucleophile; for pectinesterase activity. Substrate-binding residues include Arg448 and Trp450.

In the N-terminal section; belongs to the PMEI family. It in the C-terminal section; belongs to the pectinesterase family.

Its subcellular location is the secreted. The protein localises to the cell wall. It catalyses the reaction [(1-&gt;4)-alpha-D-galacturonosyl methyl ester](n) + n H2O = [(1-&gt;4)-alpha-D-galacturonosyl](n) + n methanol + n H(+). It participates in glycan metabolism; pectin degradation; 2-dehydro-3-deoxy-D-gluconate from pectin: step 1/5. Its function is as follows. Acts in the modification of cell walls via demethylesterification of cell wall pectin. The protein is Putative pectinesterase/pectinesterase inhibitor 22 (PME22) of Arabidopsis thaliana (Mouse-ear cress).